The following is a 155-amino-acid chain: Movement protein TGB3 (155 aa).

Residues Met-1–Tyr-59 lie on the Cytoplasmic side of the membrane. Residues Ala-60 to Ile-80 form a helical membrane-spanning segment. Residues Pro-81 to Ser-130 lie on the Lumenal side of the membrane. Positions Tyr-89–Asn-93 match the Involved in plasmodesmata targeting and virus cell-to-cell movement motif. The helical transmembrane segment at Val-131–Leu-151 threads the bilayer. The tract at residues Leu-150–Arg-155 is required for attachment to the host plasmodesmata-associated membrane compartments. Residues Ser-152–Arg-155 lie on the Cytoplasmic side of the membrane.

It belongs to the virgaviridae TGB3 movement protein family. As to quaternary structure, interacts with movement proteins TGB1 and TGB2. TGB1-TGB3-TGB2 complex formation is enhanced by ATP hydrolysis.

The protein resides in the host cell junction. The protein localises to the host plasmodesma. It localises to the host endoplasmic reticulum membrane. Its subcellular location is the host cytoplasm. It is found in the host cytoskeleton. In terms of biological role, participates in the transport of viral genome to neighboring plant cells directly through plasmodesmata, without any budding. TGBp2 and TGBp3 are necessary for intracellular delivery of TGBp1-containing vRNPs to plasmodesmata. Can gate plasmodesmata and increase their size exclusion limit. Induces host actin cytoskeleton network thickening, which probably plays a major role in virus cell-to-cell movement. The polypeptide is Movement protein TGB3 (Hordeum vulgare (Barley)).